A 275-amino-acid polypeptide reads, in one-letter code: Large ribosomal subunit protein uL2 (275 aa).

2 disordered regions span residues 28-59 (KPFA…GGHK) and 224-275 (AMNP…RHKR). Positions 35-49 (DSQSTTAGRNNNGHI) are enriched in polar residues. Residues 50 to 59 (TTRHKGGGHK) are compositionally biased toward basic residues.

It belongs to the universal ribosomal protein uL2 family. In terms of assembly, part of the 50S ribosomal subunit. Forms a bridge to the 30S subunit in the 70S ribosome.

Its function is as follows. One of the primary rRNA binding proteins. Required for association of the 30S and 50S subunits to form the 70S ribosome, for tRNA binding and peptide bond formation. It has been suggested to have peptidyltransferase activity; this is somewhat controversial. Makes several contacts with the 16S rRNA in the 70S ribosome. The protein is Large ribosomal subunit protein uL2 of Paraburkholderia xenovorans (strain LB400).